The sequence spans 248 residues: Probable transcriptional regulatory protein ECH_0704 (248 aa).

A disordered region spans residues methionine 1–arginine 21.

This sequence belongs to the TACO1 family.

It is found in the cytoplasm. The sequence is that of Probable transcriptional regulatory protein ECH_0704 from Ehrlichia chaffeensis (strain ATCC CRL-10679 / Arkansas).